Reading from the N-terminus, the 276-residue chain is F-actin-capping protein subunit alpha (276 aa).

Belongs to the F-actin-capping protein alpha subunit family. As to quaternary structure, heterodimer of an alpha and a beta subunit.

The protein resides in the cytoplasm. Its subcellular location is the cytoskeleton. In terms of biological role, F-actin-capping proteins bind in a Ca(2+)-independent manner to the fast growing ends of actin filaments (barbed end) thereby blocking the exchange of subunits at these ends. Unlike other capping proteins (such as gelsolin and severin), these proteins do not sever actin filaments. The chain is F-actin-capping protein subunit alpha (cap1) from Aspergillus fumigatus (strain ATCC MYA-4609 / CBS 101355 / FGSC A1100 / Af293) (Neosartorya fumigata).